Reading from the N-terminus, the 204-residue chain is bMERB domain-containing protein 1 (204 aa).

One can recognise a bMERB domain in the interval 3 to 150 (LKQSLSTHLE…EQEEDKEMAD (148 aa)). Residues 162-187 (VTKSPASSRAEKKAEPPPSKPTVAKT) form a disordered region.

This chain is bMERB domain-containing protein 1 (BMERB1), found in Pongo abelii (Sumatran orangutan).